We begin with the raw amino-acid sequence, 342 residues long: UDP-N-acetylglucosamine--N-acetylmuramyl-(pentapeptide) pyrophosphoryl-undecaprenol N-acetylglucosamine transferase (342 aa).

UDP-N-acetyl-alpha-D-glucosamine-binding positions include 10–12 (TGG), N124, S177, and Q275.

Belongs to the glycosyltransferase 28 family. MurG subfamily.

The protein localises to the cell inner membrane. It catalyses the reaction di-trans,octa-cis-undecaprenyl diphospho-N-acetyl-alpha-D-muramoyl-L-alanyl-D-glutamyl-meso-2,6-diaminopimeloyl-D-alanyl-D-alanine + UDP-N-acetyl-alpha-D-glucosamine = di-trans,octa-cis-undecaprenyl diphospho-[N-acetyl-alpha-D-glucosaminyl-(1-&gt;4)]-N-acetyl-alpha-D-muramoyl-L-alanyl-D-glutamyl-meso-2,6-diaminopimeloyl-D-alanyl-D-alanine + UDP + H(+). The protein operates within cell wall biogenesis; peptidoglycan biosynthesis. In terms of biological role, cell wall formation. Catalyzes the transfer of a GlcNAc subunit on undecaprenyl-pyrophosphoryl-MurNAc-pentapeptide (lipid intermediate I) to form undecaprenyl-pyrophosphoryl-MurNAc-(pentapeptide)GlcNAc (lipid intermediate II). The polypeptide is UDP-N-acetylglucosamine--N-acetylmuramyl-(pentapeptide) pyrophosphoryl-undecaprenol N-acetylglucosamine transferase (Campylobacter jejuni subsp. doylei (strain ATCC BAA-1458 / RM4099 / 269.97)).